The primary structure comprises 94 residues: Cell division protein FtsB (94 aa).

Residues 1-8 (MRLRSPYW) lie on the Cytoplasmic side of the membrane. Residues 9-26 (LFVVLILALAGLQYRLWV) form a helical membrane-spanning segment. At 27–94 (GDGSLAQVRD…DGETLYQLAK (68 aa)) the chain is on the periplasmic side. The stretch at 31-78 (LAQVRDLQKQIADQHGENERLLERNRILEAEVAELKKGTETVEERARH) forms a coiled coil.

It belongs to the FtsB family. In terms of assembly, part of a complex composed of FtsB, FtsL and FtsQ.

It is found in the cell inner membrane. Its function is as follows. Essential cell division protein. May link together the upstream cell division proteins, which are predominantly cytoplasmic, with the downstream cell division proteins, which are predominantly periplasmic. The protein is Cell division protein FtsB of Pseudomonas aeruginosa (strain ATCC 15692 / DSM 22644 / CIP 104116 / JCM 14847 / LMG 12228 / 1C / PRS 101 / PAO1).